We begin with the raw amino-acid sequence, 330 residues long: Phosphate acyltransferase (330 aa).

Belongs to the PlsX family. As to quaternary structure, homodimer. Probably interacts with PlsY.

It is found in the cytoplasm. It catalyses the reaction a fatty acyl-[ACP] + phosphate = an acyl phosphate + holo-[ACP]. It participates in lipid metabolism; phospholipid metabolism. Catalyzes the reversible formation of acyl-phosphate (acyl-PO(4)) from acyl-[acyl-carrier-protein] (acyl-ACP). This enzyme utilizes acyl-ACP as fatty acyl donor, but not acyl-CoA. The protein is Phosphate acyltransferase of Lysinibacillus sphaericus (strain C3-41).